The following is a 555-amino-acid chain: MSKPETPAASNFLRPIVQADLDSGKHAKIITRFPPEPNGYLHIGHAKSICLNFGLAKEFGGECNLRFDDTNPAKEDQEYIDAIKSDVQWLGFQWAGEERYASDYFDQLHDWAVHLIKAGKAYVCDLTPEQAREYRGSLTEPGTNSPFRERSVEENLDLFARMKAGEFPDGARALRAKIDMASPNMNLRDPILYRIRHAHHHQTGDKWCIYPSYDFTHGQSDAIEGITHSICTLEFEDHRPLYEWFLANLPVPAQPRQYEFARLNLNYTITSKRKLKQLVDEKHVSGWDDPRMSTLSGFRRRGYTPASIRNFCDMIGVNRAGGVVDIGMLEFAIREDLDANAARAMCVLKPLKVVITNYPQDQVENLELPRHPKQDMGVRVLPFSREIYIDAGDFEEVPPAGFKRLVPGGEVRLRGSYVIRADEAVKDDQGNIVELRCSYDENTLGKNPEGRKVKGVIHWVPAAESVECEVRLYDRLFRSANPEKDEEGGSFLDNINPESLVVLKGCRAEPSLANAAPEERFQFEREGYFCADMKDSKPGAPVFNRTVTLRDSWGQ.

The 'HIGH' region motif lies at 35 to 45 (PEPNGYLHIGH). Residues 36–38 (EPN) and 42–48 (HIGHAKS) each bind ATP. L-glutamine-binding residues include Asp-68 and Tyr-213. ATP contacts are provided by residues Thr-232 and 262-263 (RL). The short motif at 269–273 (ITSKR) is the 'KMSKS' region element.

The protein belongs to the class-I aminoacyl-tRNA synthetase family. As to quaternary structure, monomer.

The protein localises to the cytoplasm. The enzyme catalyses tRNA(Gln) + L-glutamine + ATP = L-glutaminyl-tRNA(Gln) + AMP + diphosphate. This is Glutamine--tRNA ligase from Stutzerimonas stutzeri (strain A1501) (Pseudomonas stutzeri).